We begin with the raw amino-acid sequence, 81 residues long: Large ribosomal subunit protein bL31B (81 aa).

This sequence belongs to the bacterial ribosomal protein bL31 family. Type B subfamily. As to quaternary structure, part of the 50S ribosomal subunit.

The sequence is that of Large ribosomal subunit protein bL31B from Bacillus cereus (strain ATCC 10987 / NRS 248).